We begin with the raw amino-acid sequence, 224 residues long: ATP-dependent dethiobiotin synthetase BioD (224 aa).

Residue 12–17 (GVGKTF) coordinates ATP. Thr16 serves as a coordination point for Mg(2+). Lys37 is an active-site residue. Position 41 (Thr41) interacts with substrate. Residue Glu107 coordinates Mg(2+). ATP contacts are provided by residues 107 to 110 (EGAG), 167 to 168 (GS), 197 to 199 (PEG), and Glu204.

The protein belongs to the dethiobiotin synthetase family. In terms of assembly, homodimer. Mg(2+) serves as cofactor.

It is found in the cytoplasm. The enzyme catalyses (7R,8S)-7,8-diammoniononanoate + CO2 + ATP = (4R,5S)-dethiobiotin + ADP + phosphate + 3 H(+). The protein operates within cofactor biosynthesis; biotin biosynthesis; biotin from 7,8-diaminononanoate: step 1/2. Its function is as follows. Catalyzes a mechanistically unusual reaction, the ATP-dependent insertion of CO2 between the N7 and N8 nitrogen atoms of 7,8-diaminopelargonic acid (DAPA, also called 7,8-diammoniononanoate) to form a ureido ring. The chain is ATP-dependent dethiobiotin synthetase BioD from Corynebacterium glutamicum (strain R).